Reading from the N-terminus, the 456-residue chain is Alcohol acyltransferase 1 (456 aa).

Catalysis depends on proton acceptor residues His-166 and Asp-382.

This sequence belongs to the plant acyltransferase family.

In terms of biological role, involved in the biosynthesis of volatile esters which confer kiwifruit flavor. Alcohol acyl transferase that can use a wide range of alcohols as substrate to produce esters. This chain is Alcohol acyltransferase 1, found in Actinidia chinensis var. chinensis (Chinese soft-hair kiwi).